The sequence spans 325 residues: L-lactate dehydrogenase (325 aa).

NAD(+) is bound by residues Val-21, Asp-42, Lys-47, Tyr-73, and 87-88 (GA). Residues Gln-90, Arg-96, and 128-131 (NPVD) each bind substrate. NAD(+) is bound by residues 126–128 (ATN) and Ser-151. 156-159 (DTAR) is a substrate binding site. 2 residues coordinate beta-D-fructose 1,6-bisphosphate: Arg-161 and His-176. The active-site Proton acceptor is His-183. At Tyr-228 the chain carries Phosphotyrosine. Thr-237 is a binding site for substrate.

Belongs to the LDH/MDH superfamily. LDH family. In terms of assembly, homotetramer.

It localises to the cytoplasm. The enzyme catalyses (S)-lactate + NAD(+) = pyruvate + NADH + H(+). It participates in fermentation; pyruvate fermentation to lactate; (S)-lactate from pyruvate: step 1/1. Allosterically activated by fructose 1,6-bisphosphate (FBP). Functionally, catalyzes the conversion of lactate to pyruvate. The polypeptide is L-lactate dehydrogenase (Shouchella clausii (strain KSM-K16) (Alkalihalobacillus clausii)).